We begin with the raw amino-acid sequence, 93 residues long: Putative pterin-4-alpha-carbinolamine dehydratase (93 aa).

Belongs to the pterin-4-alpha-carbinolamine dehydratase family.

The catalysed reaction is (4aS,6R)-4a-hydroxy-L-erythro-5,6,7,8-tetrahydrobiopterin = (6R)-L-erythro-6,7-dihydrobiopterin + H2O. This chain is Putative pterin-4-alpha-carbinolamine dehydratase, found in Nostoc punctiforme (strain ATCC 29133 / PCC 73102).